A 419-amino-acid chain; its full sequence is MAPK/MAK/MRK overlapping kinase (419 aa).

A Protein kinase domain is found at 4 to 285 (YKAIGKIGEG…AHQALQHPYF (282 aa)). ATP contacts are provided by residues 10–18 (IGEGTFSEV) and K33. D128 acts as the Proton acceptor in catalysis. Disordered stretches follow at residues 285–344 (FQEQ…RGPA) and 390–419 (PASK…KGGR). 2 stretches are compositionally biased toward basic and acidic residues: residues 322-338 (KEGR…EDRP) and 393-402 (KKTDPQKDLK).

It belongs to the protein kinase superfamily. CMGC Ser/Thr protein kinase family. CDC2/CDKX subfamily. Mg(2+) serves as cofactor. Post-translationally, autophosphorylated. Expressed in heart, brain, lung, kidney, and pancreas, and at very low levels in placenta, liver and skeletal muscle. Detected in retina.

It localises to the cytoplasm. The protein resides in the cell projection. Its subcellular location is the cilium. The protein localises to the nucleus. It catalyses the reaction L-seryl-[protein] + ATP = O-phospho-L-seryl-[protein] + ADP + H(+). It carries out the reaction L-threonyl-[protein] + ATP = O-phospho-L-threonyl-[protein] + ADP + H(+). Its activity is regulated as follows. Phosphorylation appears to increase the enzymatic activity. Its function is as follows. Able to phosphorylate several exogenous substrates and to undergo autophosphorylation. Negatively regulates cilium length in a cAMP and mTORC1 signaling-dependent manner. This Homo sapiens (Human) protein is MAPK/MAK/MRK overlapping kinase (MOK).